The sequence spans 452 residues: Sensor histidine kinase HprS (452 aa).

Residues M1 to R9 lie on the Cytoplasmic side of the membrane. Residues L10–Y30 traverse the membrane as a helical segment. Topologically, residues N31 to K158 are periplasmic. Residues I159–L179 traverse the membrane as a helical segment. The Cytoplasmic portion of the chain corresponds to I180–N452. Residues R181 to E234 enclose the HAMP domain. Residues D242–N452 form the Histidine kinase domain. H245 carries the post-translational modification Phosphohistidine; by autocatalysis.

Autophosphorylated.

Its subcellular location is the cell inner membrane. It catalyses the reaction ATP + protein L-histidine = ADP + protein N-phospho-L-histidine.. In terms of biological role, member of a two-component regulatory system HprR/HprS involved in response to hydrogen peroxide. Senses H(2)O(2), maybe via the redox state of the membrane. Activates HprR by phosphorylation. Can also phosphorylate CusR. In Escherichia coli (strain K12), this protein is Sensor histidine kinase HprS.